Reading from the N-terminus, the 629-residue chain is tRNA uridine 5-carboxymethylaminomethyl modification enzyme MnmG (629 aa).

FAD contacts are provided by residues 13–18, V125, and S180; that span reads GGGHAG. 273 to 287 contributes to the NAD(+) binding site; sequence GPRYCPSIEDKVMRF. Q370 lines the FAD pocket.

Belongs to the MnmG family. Homodimer. Heterotetramer of two MnmE and two MnmG subunits. Requires FAD as cofactor.

The protein resides in the cytoplasm. In terms of biological role, NAD-binding protein involved in the addition of a carboxymethylaminomethyl (cmnm) group at the wobble position (U34) of certain tRNAs, forming tRNA-cmnm(5)s(2)U34. The protein is tRNA uridine 5-carboxymethylaminomethyl modification enzyme MnmG of Sodalis glossinidius (strain morsitans).